Reading from the N-terminus, the 391-residue chain is Probable chaperonin-like protein PrmG (391 aa).

Positions 153-191 are disordered; that stretch reads TTRWSVRSSPPPSNTSARTASSPPRRATHSGCRSRSSTA. Positions 154–174 are enriched in polar residues; sequence TRWSVRSSPPPSNTSARTASS.

This sequence belongs to the chaperonin (HSP60) family.

Probably plays an essential role in the productive folding of PrmA and PrmC, and thus in the formation of the active PrmABCD complex. This Gordonia sp. (strain TY-5) protein is Probable chaperonin-like protein PrmG.